We begin with the raw amino-acid sequence, 84 residues long: Exodeoxyribonuclease 7 small subunit (84 aa).

This sequence belongs to the XseB family. Heterooligomer composed of large and small subunits.

It is found in the cytoplasm. The enzyme catalyses Exonucleolytic cleavage in either 5'- to 3'- or 3'- to 5'-direction to yield nucleoside 5'-phosphates.. Functionally, bidirectionally degrades single-stranded DNA into large acid-insoluble oligonucleotides, which are then degraded further into small acid-soluble oligonucleotides. The polypeptide is Exodeoxyribonuclease 7 small subunit (Haemophilus influenzae (strain ATCC 51907 / DSM 11121 / KW20 / Rd)).